We begin with the raw amino-acid sequence, 556 residues long: MASDIEIARGAKKKPIQEVAARAGVSPENLIPYGHDKAKISAAHLAGLAHNATGKLILVTAINPTPAGEGKTTTSIGLADAMNRIGANTLLCLREPSLGPCFGMKGGATGGGLAQIVPMEDINLHFTGDFHAITSAHNLLSTMIDNHIHWGGEPKLEAVRTSWRRVMDMNDRSLRNIVSGLGGPGNGSPSETGFDITVASEVMAILCLATDAEDLEARLARIIVGYTSEKEAVTAADIKATGAMMALLRDAMLPNLVQTLENNPCLVHGGPFANIAHGCNSVMATSAALKMADYVVTEAGFGADLGAEKFLNIKCRQAGLAPDAVVLVATIRALKMHGGLGKNDLGKVSYEALESGLENLGRHIGNLRSFGLPVIVAINRFTTDTEGEVHALQAYCEKLGVPVSLCTHWAEGGKGTEDLARGVTALIEKGEADFKPLYPDDMPLLEKIETVAKSIYRAGRVETTRAVRNQLAAWEKAGFGHLPVCMAKTQYSFSTDPALLGAPEGHVVRLREVRLAAGAGFVVAICGDIMTMPGLPRRPAAEHIHLNRQGQIEGLN.

Residue T65–T72 coordinates ATP.

The protein belongs to the formate--tetrahydrofolate ligase family.

The enzyme catalyses (6S)-5,6,7,8-tetrahydrofolate + formate + ATP = (6R)-10-formyltetrahydrofolate + ADP + phosphate. The protein operates within one-carbon metabolism; tetrahydrofolate interconversion. In Hyphomonas neptunium (strain ATCC 15444), this protein is Formate--tetrahydrofolate ligase.